We begin with the raw amino-acid sequence, 227 residues long: Probable 2-phosphosulfolactate phosphatase (227 aa).

It belongs to the ComB family. Requires Mg(2+) as cofactor.

It catalyses the reaction (2R)-O-phospho-3-sulfolactate + H2O = (2R)-3-sulfolactate + phosphate. In Thermotoga petrophila (strain ATCC BAA-488 / DSM 13995 / JCM 10881 / RKU-1), this protein is Probable 2-phosphosulfolactate phosphatase.